A 346-amino-acid chain; its full sequence is Methylthioribose-1-phosphate isomerase (346 aa).

Substrate contacts are provided by residues 47–49, arginine 88, and glutamine 195; that span reads RGA. Aspartate 236 (proton donor) is an active-site residue. Residue 246 to 247 coordinates substrate; it reads NK.

Belongs to the eIF-2B alpha/beta/delta subunits family. MtnA subfamily.

The enzyme catalyses 5-(methylsulfanyl)-alpha-D-ribose 1-phosphate = 5-(methylsulfanyl)-D-ribulose 1-phosphate. It participates in amino-acid biosynthesis; L-methionine biosynthesis via salvage pathway; L-methionine from S-methyl-5-thio-alpha-D-ribose 1-phosphate: step 1/6. Catalyzes the interconversion of methylthioribose-1-phosphate (MTR-1-P) into methylthioribulose-1-phosphate (MTRu-1-P). This chain is Methylthioribose-1-phosphate isomerase, found in Maridesulfovibrio salexigens (strain ATCC 14822 / DSM 2638 / NCIMB 8403 / VKM B-1763) (Desulfovibrio salexigens).